Consider the following 122-residue polypeptide: Large ribosomal subunit protein uL14 (122 aa).

The protein belongs to the universal ribosomal protein uL14 family. As to quaternary structure, part of the 50S ribosomal subunit. Forms a cluster with proteins L3 and L19. In the 70S ribosome, L14 and L19 interact and together make contacts with the 16S rRNA in bridges B5 and B8.

Binds to 23S rRNA. Forms part of two intersubunit bridges in the 70S ribosome. This chain is Large ribosomal subunit protein uL14, found in Parvibaculum lavamentivorans (strain DS-1 / DSM 13023 / NCIMB 13966).